Here is a 307-residue protein sequence, read N- to C-terminus: Bifunctional protein FolD (307 aa).

Residues 165–167 (GRS), S190, and I231 contribute to the NADP(+) site.

It belongs to the tetrahydrofolate dehydrogenase/cyclohydrolase family. Homodimer.

It carries out the reaction (6R)-5,10-methylene-5,6,7,8-tetrahydrofolate + NADP(+) = (6R)-5,10-methenyltetrahydrofolate + NADPH. The catalysed reaction is (6R)-5,10-methenyltetrahydrofolate + H2O = (6R)-10-formyltetrahydrofolate + H(+). It functions in the pathway one-carbon metabolism; tetrahydrofolate interconversion. Its function is as follows. Catalyzes the oxidation of 5,10-methylenetetrahydrofolate to 5,10-methenyltetrahydrofolate and then the hydrolysis of 5,10-methenyltetrahydrofolate to 10-formyltetrahydrofolate. This is Bifunctional protein FolD from Koribacter versatilis (strain Ellin345).